We begin with the raw amino-acid sequence, 362 residues long: EARP-interacting protein 1 (362 aa).

4 WD repeats span residues 61 to 108, 206 to 246, 250 to 290, and 319 to 359; these read HPAG…RTLE, AHIH…SALT, PHAH…SEQQ, and EHED…KYAL.

This sequence belongs to the WD repeat EIPR1 family. In terms of tissue distribution, expressed in the hypodermis and the pharynx.

It is found in the cytoplasm. Its function is as follows. Plays a role in the trafficking of cargo to dense-core vesicles, probably through association with the endosome-associated recycling protein (EARP) complex. Important for neuronal function. This Caenorhabditis elegans protein is EARP-interacting protein 1.